We begin with the raw amino-acid sequence, 516 residues long: Apolipoprotein N-acyltransferase (516 aa).

The next 5 helical transmembrane spans lie at 23–43 (ILILLLAAALAGAFTLFAFAP), 68–88 (AFWLGYAWGLGAYVSNFRWIY), 94–114 (VAGLPAWIAAPLVLLLPAYLA), 135–155 (WLLAFPAAWELGEWLRGWVMT), and 178–198 (LGGIHLVNYLVALSAAALAML). Residues 241-481 (AQGNIAQELK…VLTGFAQSRQ (241 aa)) enclose the CN hydrolase domain. Glu-279 functions as the Proton acceptor in the catalytic mechanism. Lys-339 is an active-site residue. Cys-391 serves as the catalytic Nucleophile. A helical transmembrane segment spans residues 489–509 (FGNLPVVLGCGALLLLALLLG).

The protein belongs to the CN hydrolase family. Apolipoprotein N-acyltransferase subfamily.

Its subcellular location is the cell inner membrane. It carries out the reaction N-terminal S-1,2-diacyl-sn-glyceryl-L-cysteinyl-[lipoprotein] + a glycerophospholipid = N-acyl-S-1,2-diacyl-sn-glyceryl-L-cysteinyl-[lipoprotein] + a 2-acyl-sn-glycero-3-phospholipid + H(+). The protein operates within protein modification; lipoprotein biosynthesis (N-acyl transfer). Functionally, catalyzes the phospholipid dependent N-acylation of the N-terminal cysteine of apolipoprotein, the last step in lipoprotein maturation. This is Apolipoprotein N-acyltransferase from Chromobacterium violaceum (strain ATCC 12472 / DSM 30191 / JCM 1249 / CCUG 213 / NBRC 12614 / NCIMB 9131 / NCTC 9757 / MK).